The primary structure comprises 345 residues: Trace amine-associated receptor 6 (345 aa).

At 1-32 (MSSNSSLLVAVQLCYANVNGSCVKIPFSPGSR) the chain is on the extracellular side. Residues N4 and N19 are each glycosylated (N-linked (GlcNAc...) asparagine). 2 disulfides stabilise this stretch: C22/C186 and C105/C190. The helical transmembrane segment at 33–53 (VILYIVFGFGAVLAVFGNLLV) threads the bilayer. The Cytoplasmic segment spans residues 54–68 (MISILHFKQLHSPTN). The helical transmembrane segment at 69–89 (FLVASLACADFLVGVTVMPFS) threads the bilayer. The Extracellular portion of the chain corresponds to 90 to 107 (MVRTVESCWYFGRSFCTF). A helical transmembrane segment spans residues 108–128 (HTCCDVAFCYSSLFHLCFISI). Topologically, residues 129–147 (DRYIAVTDPLVYPTKFTVS) are cytoplasmic. Residues 148–168 (VSGICISVSWILPLMYSGAVF) form a helical membrane-spanning segment. Topologically, residues 169-202 (YTGVYDDGLEELSDALNCIGGCQTVVNQNWVLTD) are extracellular. The helical transmembrane segment at 203–223 (FLSFFIPTFIMIILYGNIFLV) threads the bilayer. The Cytoplasmic segment spans residues 224 to 259 (ARRQAKKIENTGSKTESSSESYKARVARRERKAAKT). Residues 260 to 276 (LGVTVVAFMISWLPYSI) form a helical membrane-spanning segment. Topologically, residues 277 to 282 (DSLIDA) are extracellular. The chain crosses the membrane as a helical span at residues 283–302 (FMGFITPACIYEICCWCAYY). Residues 303-345 (NSAMNPLIYALFYPWFRKAIKVIVTGQVLKNSSATMNLFSEHI) lie on the Cytoplasmic side of the membrane.

This sequence belongs to the G-protein coupled receptor 1 family. In terms of tissue distribution, expressed at low abundance in various brain tissues, as well as in fetal liver, but not in the cerebellum or placenta. In the brain, comparable levels of expression in basal ganglia, frontal cortex, substantia nigra, amygdala and hippocampus, highest expression in hippocampus and lowest expression in basal ganglia.

The protein localises to the cell membrane. Olfactory receptor specific for trace amines, such as beta-phenylethylamine (beta-PEA). Trace amine compounds are enriched in animal body fluids and act on trace amine-associated receptors (TAARs) to elicit both intraspecific and interspecific innate behaviors. Beta-PEA-binding causes a conformation change that triggers signaling via G(s)-class of G alpha proteins (GNAL or GNAS). In Homo sapiens (Human), this protein is Trace amine-associated receptor 6.